Reading from the N-terminus, the 126-residue chain is Fluoride-specific ion channel FluC (126 aa).

A run of 4 helical transmembrane segments spans residues 4–24 (PLLS…FLGL), 33–53 (IPLG…FAMA), 67–87 (FVIT…IEIV), and 97–117 (MAML…CLGL). Na(+)-binding residues include glycine 74 and threonine 77.

This sequence belongs to the fluoride channel Fluc/FEX (TC 1.A.43) family.

The protein localises to the cell inner membrane. The enzyme catalyses fluoride(in) = fluoride(out). With respect to regulation, na(+) is not transported, but it plays an essential structural role and its presence is essential for fluoride channel function. Its function is as follows. Fluoride-specific ion channel. Important for reducing fluoride concentration in the cell, thus reducing its toxicity. The sequence is that of Fluoride-specific ion channel FluC from Acinetobacter baumannii (strain SDF).